Here is a 404-residue protein sequence, read N- to C-terminus: Multidrug resistance protein MdtG (404 aa).

11 helical membrane passes run 19-39, 56-76, 90-110, 113-133, 144-164, 171-191, 222-242, 254-274, 288-308, 317-337, and 376-396; these read LGCF…PLYV, LVFS…GGLA, LGMA…QFLI, ALLG…ATQV, TLST…GLLA, PVFF…FFFI, LFVT…ILTL, IAFI…LSAP, ILIV…FVQT, FLLG…LVYN, and AVFC…WNSL.

It belongs to the major facilitator superfamily. DHA1 family. MdtG (TC 2.A.1.2.20) subfamily.

It localises to the cell inner membrane. The protein is Multidrug resistance protein MdtG of Salmonella arizonae (strain ATCC BAA-731 / CDC346-86 / RSK2980).